Consider the following 800-residue polypeptide: Cation/H(+) antiporter 19 (800 aa).

The next 12 helical transmembrane spans lie at 30 to 50, 60 to 77, 92 to 112, 127 to 147, 158 to 178, 196 to 216, 224 to 244, 278 to 298, 315 to 335, 343 to 363, 375 to 395, and 408 to 428; these read FALP…RLLA, RVIA…SALG, LTVL…LVGL, LLIA…TSFV, QLPF…PVLA, MSAA…AIAL, LVSV…VVAI, FVTD…GIVA, LVSG…TDVT, WGLL…GTVG, AVTL…VLNI, and AILV…VMLI. A disordered region spans residues 776–800; that stretch reads ADTRPLVEEDAEYDQSSRDISDLTA. A compositionally biased stretch (basic and acidic residues) spans 790–800; it reads QSSRDISDLTA.

The protein belongs to the monovalent cation:proton antiporter 2 (CPA2) transporter (TC 2.A.37) family. CHX (TC 2.A.37.4) subfamily. Expressed in the whole plant but preferentially in pollen.

It is found in the membrane. In terms of biological role, may operate as a cation/H(+) antiporter. The protein is Cation/H(+) antiporter 19 (CHX19) of Arabidopsis thaliana (Mouse-ear cress).